A 267-amino-acid polypeptide reads, in one-letter code: Indole-3-glycerol phosphate synthase (267 aa).

The protein belongs to the TrpC family.

It catalyses the reaction 1-(2-carboxyphenylamino)-1-deoxy-D-ribulose 5-phosphate + H(+) = (1S,2R)-1-C-(indol-3-yl)glycerol 3-phosphate + CO2 + H2O. It functions in the pathway amino-acid biosynthesis; L-tryptophan biosynthesis; L-tryptophan from chorismate: step 4/5. The protein is Indole-3-glycerol phosphate synthase of Cupriavidus taiwanensis (strain DSM 17343 / BCRC 17206 / CCUG 44338 / CIP 107171 / LMG 19424 / R1) (Ralstonia taiwanensis (strain LMG 19424)).